A 665-amino-acid polypeptide reads, in one-letter code: Methionine--tRNA ligase (665 aa).

The short motif at 12–22 (YYPSGKLHIGS) is the 'HIGH' region element. The short motif at 308-312 (KMSKS) is the 'KMSKS' region element. Lys-311 contacts ATP. A tRNA-binding domain is found at 562-665 (TFDAVEIRVA…SSVPNGSIIG (104 aa)).

It belongs to the class-I aminoacyl-tRNA synthetase family. MetG type 2B subfamily. Homodimer.

It localises to the cytoplasm. It carries out the reaction tRNA(Met) + L-methionine + ATP = L-methionyl-tRNA(Met) + AMP + diphosphate. Is required not only for elongation of protein synthesis but also for the initiation of all mRNA translation through initiator tRNA(fMet) aminoacylation. This Streptococcus pyogenes serotype M1 protein is Methionine--tRNA ligase (metG).